An 86-amino-acid chain; its full sequence is Large ribosomal subunit protein bL31 (86 aa).

Residues Tyr65–Ser86 are disordered. Residues Ser73–Ser86 are compositionally biased toward basic and acidic residues.

It belongs to the bacterial ribosomal protein bL31 family. Type A subfamily. Part of the 50S ribosomal subunit.

Binds the 23S rRNA. The protein is Large ribosomal subunit protein bL31 of Prochlorococcus marinus (strain NATL2A).